Consider the following 229-residue polypeptide: Small ribosomal subunit protein uS5 (229 aa).

Residues 61–124 (LEEQVLDVKL…AHAKLSLIKV (64 aa)) form the S5 DRBM domain.

This sequence belongs to the universal ribosomal protein uS5 family. In terms of assembly, part of the 30S ribosomal subunit. Contacts protein S4.

Functionally, with S4 and S12 plays an important role in translational accuracy. This Methanococcus maripaludis (strain C6 / ATCC BAA-1332) protein is Small ribosomal subunit protein uS5.